Consider the following 452-residue polypeptide: Retrograde protein of 51 kDa (452 aa).

Residues 1–13 are compositionally biased toward basic and acidic residues; the sequence is MQKGAKIEDEGRQ. The disordered stretch occupies residues 1 to 50; the sequence is MQKGAKIEDEGRQSRIQSRNFIIQRSDPRTRGSSVYSSRSSSYNVRSSIS. A head region spans residues 1–75; sequence MQKGAKIEDE…KGNREKEKRE (75 aa). Residues 14-23 are compositionally biased toward polar residues; sequence SRIQSRNFII. A compositionally biased stretch (low complexity) spans 33-50; that stretch reads SSVYSSRSSSYNVRSSIS. An IF rod domain is found at 72–424; that stretch reads EKREMQNLNE…KLLEGEESRV (353 aa). Positions 76-111 are coil 1A; that stretch reads MQNLNERLASYIEKVHFLDAQVKKLEAENEALRNRK. Residues 112–121 form a linker 1 region; sequence VEDLQPIRDA. Residues 122–259 are coil 1B; the sequence is YENELRQARK…DLLDQLELLK (138 aa). A Sulfoserine modification is found at Ser-156. The segment at 260 to 278 is linker 12; sequence PEPIQIKGMDYADFWKSEL. Positions 279–424 are coil 2; sequence AKCVREINLA…KLLEGEESRV (146 aa). The tract at residues 425-452 is tail; that stretch reads GLRTLVEQAIGTQSKGSASLKDAIQSSS.

Belongs to the intermediate filament family.

This is Retrograde protein of 51 kDa (RGP51) from Lymnaea stagnalis (Great pond snail).